Consider the following 221-residue polypeptide: Probable nicotinate-nucleotide adenylyltransferase (221 aa).

This sequence belongs to the NadD family.

It carries out the reaction nicotinate beta-D-ribonucleotide + ATP + H(+) = deamido-NAD(+) + diphosphate. It participates in cofactor biosynthesis; NAD(+) biosynthesis; deamido-NAD(+) from nicotinate D-ribonucleotide: step 1/1. Its function is as follows. Catalyzes the reversible adenylation of nicotinate mononucleotide (NaMN) to nicotinic acid adenine dinucleotide (NaAD). The protein is Probable nicotinate-nucleotide adenylyltransferase of Marinomonas sp. (strain MWYL1).